The chain runs to 120 residues: Ribosome-binding factor A (120 aa).

It belongs to the RbfA family. Monomer. Binds 30S ribosomal subunits, but not 50S ribosomal subunits or 70S ribosomes.

It localises to the cytoplasm. Its function is as follows. One of several proteins that assist in the late maturation steps of the functional core of the 30S ribosomal subunit. Associates with free 30S ribosomal subunits (but not with 30S subunits that are part of 70S ribosomes or polysomes). Required for efficient processing of 16S rRNA. May interact with the 5'-terminal helix region of 16S rRNA. The polypeptide is Ribosome-binding factor A (Borreliella burgdorferi (strain ATCC 35210 / DSM 4680 / CIP 102532 / B31) (Borrelia burgdorferi)).